We begin with the raw amino-acid sequence, 207 residues long: dITP/XTP pyrophosphatase (207 aa).

16 to 21 (SNNKGK) is a substrate binding site. The active-site Proton acceptor is the Asp-79. A Mg(2+)-binding site is contributed by Asp-79. Residues Ser-80, 166-169 (FGYD), Lys-189, and 194-195 (HR) each bind substrate.

It belongs to the HAM1 NTPase family. In terms of assembly, homodimer. Mg(2+) is required as a cofactor.

It catalyses the reaction XTP + H2O = XMP + diphosphate + H(+). The enzyme catalyses dITP + H2O = dIMP + diphosphate + H(+). The catalysed reaction is ITP + H2O = IMP + diphosphate + H(+). Its function is as follows. Pyrophosphatase that catalyzes the hydrolysis of nucleoside triphosphates to their monophosphate derivatives, with a high preference for the non-canonical purine nucleotides XTP (xanthosine triphosphate), dITP (deoxyinosine triphosphate) and ITP. Seems to function as a house-cleaning enzyme that removes non-canonical purine nucleotides from the nucleotide pool, thus preventing their incorporation into DNA/RNA and avoiding chromosomal lesions. The sequence is that of dITP/XTP pyrophosphatase from Acinetobacter baumannii (strain ATCC 17978 / DSM 105126 / CIP 53.77 / LMG 1025 / NCDC KC755 / 5377).